Consider the following 453-residue polypeptide: Putative receptor-like protein kinase At2g30940 (453 aa).

The chain crosses the membrane as a helical span at residues 60-80; it reads ASASIAFLLVLIISVLLCFIF. Position 155 is a phosphothreonine (Thr155). One can recognise a Protein kinase domain in the interval 166 to 428; that stretch reads FADDNVITKG…IHMLQPHDLL (263 aa). ATP is bound by residues 172–180 and Lys194; that span reads ITKGDSSTV. A Phosphotyrosine modification is found at Tyr240. The active-site Proton acceptor is Asp293. Ser297 is subject to Phosphoserine. The residue at position 322 (Thr322) is a Phosphothreonine.

The protein belongs to the protein kinase superfamily.

It is found in the cell membrane. The catalysed reaction is L-seryl-[protein] + ATP = O-phospho-L-seryl-[protein] + ADP + H(+). The enzyme catalyses L-threonyl-[protein] + ATP = O-phospho-L-threonyl-[protein] + ADP + H(+). This chain is Putative receptor-like protein kinase At2g30940, found in Arabidopsis thaliana (Mouse-ear cress).